Here is a 279-residue protein sequence, read N- to C-terminus: Proto-oncogene FRAT1 (279 aa).

2 disordered regions span residues 1–24 (MPCR…EEDS) and 56–76 (AQHS…APGP). Over residues 7-24 (EEEEAGEEAEGEEEEEDS) the composition is skewed to acidic residues. Serine 88 carries the phosphoserine modification. Disordered regions lie at residues 136–200 (GPSA…DDPH) and 228–279 (RAKL…VPGS). Positions 198–220 (DPHRLLQQLVLSGNLIKEAVRRL) are involved in GSK-3 binding. Serine 249 and serine 252 each carry phosphoserine.

The protein belongs to the GSK-3-binding protein family. Binds DVL1. Binds GSK-3 and prevent GSK-3-dependent phosphorylation. Phosphorylated.

It is found in the cytoplasm. Functionally, positively regulates the Wnt signaling pathway by stabilizing beta-catenin through the association with GSK-3. May play a role in tumor progression and collaborate with PIM1 and MYC in lymphomagenesis. The polypeptide is Proto-oncogene FRAT1 (FRAT1) (Homo sapiens (Human)).